Reading from the N-terminus, the 424-residue chain is uncharacterized protein (424 aa).

Transmembrane regions (helical) follow at residues 9 to 29 (ITWIQGTALTIGAVLGCGILI), 41 to 61 (ASLFVWVFMSFLSFFLVGTLA), 86 to 106 (GAILGWIMLGSVPIGVPIIAL), 119 to 139 (ADWQITLIAGCMLAISILLHM), 148 to 168 (ISTLVICVIVFLLVTSIAVSL), 184 to 204 (WSAAGSVSVMIFFSFVGWEMI), 222 to 242 (LFLAASCVAGLYIMLSFVTVG), 270 to 290 (VTVCLALFITFATIHANIAGF), 320 to 340 (VLTAMAAVFGLVLAAHGLFQI), 345 to 365 (LLKGPSAAFIASYICTMAAAL), and 377 to 397 (MALGAFVACAVIYSFSGWALL).

The protein belongs to the amino acid-polyamine-organocation (APC) superfamily.

It localises to the cell membrane. This is an uncharacterized protein from Bacillus subtilis (strain 168).